We begin with the raw amino-acid sequence, 525 residues long: MFRVLVSDKMSNDGLQPLIESDFIEIVQKNVADAEDELHTFDALLVRSATKVTEDLFNKMTSLKIVGRAGVGVDNIDIDEATKHGVIVINAPNGNTISTAEHTFAMISSLMRHIPQANISVKSREWNRTAYVGSELYGKTLGIVGLGRIGSEIAQRARAFGMTVHVFDPFLTEERAKKIGVNSRTFEEVLESADIITVHTPLTKETKGLLNKETIAKTKKGVRLINCARGGIIDEAALLEALENGHVAGAALDVFEVEPPVDNKLVDHPLVIATPHLGASTKEAQLNVAAQVSEEVLQFAKGLPVMSAINLPAMTKDEFAKIKPYHQIAGKIGSLVSQCMKEPVQDVAIQYEGTIAKLETSFITKALLSGFLKPRVDSTVNEVNAGGVAKERGISFSEKISSSESGYDNCISVKVTGDRSTFTVTATYIPHFGERIVEINGFNIDFYPTGHLVYIQHQDTTGVIGRVGRILGDNDINIATMQVGRKEKGGEAIMMLSFDRHLEDKIVKELTNVPDIVSVKLIDLP.

NAD(+) is bound by residues 148 to 149 (RI), aspartate 168, threonine 200, 227 to 229 (CAR), and aspartate 253. The active site involves arginine 229. Residue glutamate 258 is part of the active site. Catalysis depends on histidine 276, which acts as the Proton donor. 276–279 (HLGA) lines the NAD(+) pocket. Residues 452–524 (LVYIQHQDTT…DIVSVKLIDL (73 aa)) enclose the ACT domain.

Belongs to the D-isomer specific 2-hydroxyacid dehydrogenase family.

It carries out the reaction (2R)-3-phosphoglycerate + NAD(+) = 3-phosphooxypyruvate + NADH + H(+). The catalysed reaction is (R)-2-hydroxyglutarate + NAD(+) = 2-oxoglutarate + NADH + H(+). It participates in amino-acid biosynthesis; L-serine biosynthesis; L-serine from 3-phospho-D-glycerate: step 1/3. With respect to regulation, in bacteria displays feedback inhibition by L-serine. Functionally, catalyzes the reversible oxidation of 3-phospho-D-glycerate to 3-phosphonooxypyruvate, the first step of the phosphorylated L-serine biosynthesis pathway. Also catalyzes the reversible oxidation of 2-hydroxyglutarate to 2-oxoglutarate. The polypeptide is D-3-phosphoglycerate dehydrogenase (serA) (Bacillus subtilis (strain 168)).